The chain runs to 271 residues: uncharacterized protein (271 aa).

The protein belongs to the HAD-like hydrolase superfamily.

This is an uncharacterized protein from Staphylococcus aureus (strain MRSA252).